The chain runs to 310 residues: Acetylglutamate kinase (310 aa).

Substrate contacts are provided by residues 74-75, Arg-96, and Asn-201; that span reads GG.

This sequence belongs to the acetylglutamate kinase family. ArgB subfamily.

It localises to the cytoplasm. It carries out the reaction N-acetyl-L-glutamate + ATP = N-acetyl-L-glutamyl 5-phosphate + ADP. It functions in the pathway amino-acid biosynthesis; L-arginine biosynthesis; N(2)-acetyl-L-ornithine from L-glutamate: step 2/4. In terms of biological role, catalyzes the ATP-dependent phosphorylation of N-acetyl-L-glutamate. The polypeptide is Acetylglutamate kinase (Arthrobacter sp. (strain FB24)).